We begin with the raw amino-acid sequence, 159 residues long: Ribosomal RNA large subunit methyltransferase H (159 aa).

S-adenosyl-L-methionine is bound by residues leucine 76, glycine 107, and 126 to 131 (LSKLTM).

This sequence belongs to the RNA methyltransferase RlmH family. Homodimer.

It localises to the cytoplasm. The enzyme catalyses pseudouridine(1915) in 23S rRNA + S-adenosyl-L-methionine = N(3)-methylpseudouridine(1915) in 23S rRNA + S-adenosyl-L-homocysteine + H(+). Its function is as follows. Specifically methylates the pseudouridine at position 1915 (m3Psi1915) in 23S rRNA. This is Ribosomal RNA large subunit methyltransferase H from Acinetobacter baumannii (strain AB307-0294).